The following is a 468-amino-acid chain: Methionine aminopeptidase 2 (468 aa).

Residues 63–74 (AAKEATKKDAKG) show a composition bias toward basic and acidic residues. Residues 63–87 (AAKEATKKDAKGGKGKANGSAAATA) are disordered. H219 lines the substrate pocket. A divalent metal cation is bound by residues D239, D250, and H319. H327 provides a ligand contact to substrate. 2 residues coordinate a divalent metal cation: E352 and E449.

It belongs to the peptidase M24A family. Methionine aminopeptidase eukaryotic type 2 subfamily. It depends on Co(2+) as a cofactor. Zn(2+) is required as a cofactor. Requires Mn(2+) as cofactor. The cofactor is Fe(2+).

It is found in the cytoplasm. The enzyme catalyses Release of N-terminal amino acids, preferentially methionine, from peptides and arylamides.. Its activity is regulated as follows. Inhibited by the fumagillin analog, TNP-470. Cotranslationally removes the N-terminal methionine from nascent proteins. The N-terminal methionine is often cleaved when the second residue in the primary sequence is small and uncharged (Met-Ala-, Cys, Gly, Pro, Ser, Thr, or Val). Required for germ cell proliferation and/or differentiation. The protein is Methionine aminopeptidase 2 of Caenorhabditis elegans.